The chain runs to 532 residues: MINNHPIREKPKHIIFNLLSLIFFLIFLSTVVSSQSPSYTTHKTQRLTETKTIPELIIADLNLTILKVNLASSNFSDLQTRLFPNLTHYERCAFEDCLGLLDDTISDLETAVSDLRSSSLEFNDISMLLTNVMTYQDTCLDGFSTSDNENNNDMTYELPENLKEIILDISNNLSNSLHMLQVISRKKPSPKSSEVDVEYPSWLSENDQRLLEAPVQETNYNLSVAIDGTGNFTTINDAVFAAPNMSETRFIIYIKGGEYFENVELPKKKTMIMFIGDGIGKTVIKANRSRIDGWSTFQTPTVGVKGKGYIAKDISFVNSAGPAKAQAVAFRSGSDHSAFYRCEFDGYQDTLYVHSAKQFYRECDIYGTIDFIFGNAAVVFQNSSLYARKPNPGHKIAFTAQSRNQSDQPTGISILNCRILAAPDLIPVKENFKAYLGRPWRKYSRTVIIKSFIDDLIHPAGWLEGKKDFALETLYYGEYMNEGPGANMAKRVTWPGFRRIENQTEATQFTVGPFIDGSTWLNSTGIPFSLGF.

Positions Met-1–Ser-34 are cleaved as a signal peptide. The pectinesterase inhibitor 39 stretch occupies residues Gln-35–Ile-169. N-linked (GlcNAc...) asparagine glycosylation is found at Asn-62, Asn-74, Asn-85, Asn-172, Asn-221, Asn-231, Asn-244, and Asn-287. Residues Asn-221–Ser-518 form a pectinesterase 39 region. Thr-296 and Gln-326 together coordinate substrate. Asp-349 functions as the Proton donor; for pectinesterase activity in the catalytic mechanism. Residue Asp-370 is the Nucleophile; for pectinesterase activity of the active site. Asn-382 and Asn-404 each carry an N-linked (GlcNAc...) asparagine glycan. The substrate site is built by Arg-438 and Trp-440. Residues Asn-502 and Asn-522 are each glycosylated (N-linked (GlcNAc...) asparagine).

It in the N-terminal section; belongs to the PMEI family. The protein in the C-terminal section; belongs to the pectinesterase family. Expressed in siliques but not in flower buds.

The protein resides in the secreted. It localises to the cell wall. The enzyme catalyses [(1-&gt;4)-alpha-D-galacturonosyl methyl ester](n) + n H2O = [(1-&gt;4)-alpha-D-galacturonosyl](n) + n methanol + n H(+). The protein operates within glycan metabolism; pectin degradation; 2-dehydro-3-deoxy-D-gluconate from pectin: step 1/5. Functionally, acts in the modification of cell walls via demethylesterification of cell wall pectin. The protein is Probable pectinesterase/pectinesterase inhibitor 39 (PME39) of Arabidopsis thaliana (Mouse-ear cress).